A 364-amino-acid chain; its full sequence is tRNA 2-selenouridine synthase (364 aa).

The Rhodanese domain occupies 14 to 137 (LLADTPLIDV…LRQTAIQATW (124 aa)). The active-site S-selanylcysteine intermediate is Cys97.

It belongs to the SelU family. In terms of assembly, monomer.

The catalysed reaction is 5-methylaminomethyl-2-thiouridine(34) in tRNA + selenophosphate + (2E)-geranyl diphosphate + H2O + H(+) = 5-methylaminomethyl-2-selenouridine(34) in tRNA + (2E)-thiogeraniol + phosphate + diphosphate. It carries out the reaction 5-methylaminomethyl-2-thiouridine(34) in tRNA + (2E)-geranyl diphosphate = 5-methylaminomethyl-S-(2E)-geranyl-thiouridine(34) in tRNA + diphosphate. It catalyses the reaction 5-methylaminomethyl-S-(2E)-geranyl-thiouridine(34) in tRNA + selenophosphate + H(+) = 5-methylaminomethyl-2-(Se-phospho)selenouridine(34) in tRNA + (2E)-thiogeraniol. The enzyme catalyses 5-methylaminomethyl-2-(Se-phospho)selenouridine(34) in tRNA + H2O = 5-methylaminomethyl-2-selenouridine(34) in tRNA + phosphate. Its function is as follows. Involved in the post-transcriptional modification of the uridine at the wobble position (U34) of tRNA(Lys), tRNA(Glu) and tRNA(Gln). Catalyzes the conversion of 2-thiouridine (S2U-RNA) to 2-selenouridine (Se2U-RNA). Acts in a two-step process involving geranylation of 2-thiouridine (S2U) to S-geranyl-2-thiouridine (geS2U) and subsequent selenation of the latter derivative to 2-selenouridine (Se2U) in the tRNA chain. This is tRNA 2-selenouridine synthase from Salmonella agona (strain SL483).